We begin with the raw amino-acid sequence, 266 residues long: Hydroxyacylglutathione hydrolase (266 aa).

Residues His-53, His-55, Asp-57, His-58, His-118, Asp-140, and His-178 each contribute to the Zn(2+) site.

Belongs to the metallo-beta-lactamase superfamily. Glyoxalase II family. In terms of assembly, monomer. Requires Zn(2+) as cofactor.

The enzyme catalyses an S-(2-hydroxyacyl)glutathione + H2O = a 2-hydroxy carboxylate + glutathione + H(+). It functions in the pathway secondary metabolite metabolism; methylglyoxal degradation; (R)-lactate from methylglyoxal: step 2/2. Thiolesterase that catalyzes the hydrolysis of S-D-lactoyl-glutathione to form glutathione and D-lactic acid. The polypeptide is Hydroxyacylglutathione hydrolase (Cupriavidus taiwanensis (strain DSM 17343 / BCRC 17206 / CCUG 44338 / CIP 107171 / LMG 19424 / R1) (Ralstonia taiwanensis (strain LMG 19424))).